The following is a 360-amino-acid chain: UPF0283 membrane protein Asuc_0957 (360 aa).

3 helical membrane passes run 74 to 94 (VIAVAVLFLGATVAQSVQWLI), 102 to 122 (WIYFAFAVVGCSVVGLGLSAL), and 215 to 235 (AVENGIVVAISPLAIVDMLFL).

Belongs to the UPF0283 family.

It is found in the cell inner membrane. In Actinobacillus succinogenes (strain ATCC 55618 / DSM 22257 / CCUG 43843 / 130Z), this protein is UPF0283 membrane protein Asuc_0957.